We begin with the raw amino-acid sequence, 148 residues long: uncharacterized protein (148 aa).

Residues 38–99 (QFRRHHHAEH…RRHLRKGHLK (62 aa)) are disordered. The segment covering 64–82 (FHHDGGRHGHATRIHENNR) has biased composition (basic and acidic residues). Positions 83-99 (RPHKRNRRRHLRKGHLK) are enriched in basic residues.

This is an uncharacterized protein from Fowl adenovirus A serotype 1 (strain CELO / Phelps) (FAdV-1).